Consider the following 83-residue polypeptide: UPF0248 protein PYRAB10580 (83 aa).

The protein belongs to the UPF0248 family.

This chain is UPF0248 protein PYRAB10580, found in Pyrococcus abyssi (strain GE5 / Orsay).